The chain runs to 370 residues: Dual-specificity RNA methyltransferase RlmN (370 aa).

Glu-93 acts as the Proton acceptor in catalysis. The Radical SAM core domain occupies 99-331 (DRKRGTLCVS…TRVRRTRGDD (233 aa)). A disulfide bond links Cys-106 and Cys-336. Residues Cys-113, Cys-117, and Cys-120 each contribute to the [4Fe-4S] cluster site. S-adenosyl-L-methionine-binding positions include 162–163 (GE), Ser-194, 216–218 (SLH), and Asn-293. Cys-336 (S-methylcysteine intermediate) is an active-site residue.

Belongs to the radical SAM superfamily. RlmN family. Requires [4Fe-4S] cluster as cofactor.

It is found in the cytoplasm. It carries out the reaction adenosine(2503) in 23S rRNA + 2 reduced [2Fe-2S]-[ferredoxin] + 2 S-adenosyl-L-methionine = 2-methyladenosine(2503) in 23S rRNA + 5'-deoxyadenosine + L-methionine + 2 oxidized [2Fe-2S]-[ferredoxin] + S-adenosyl-L-homocysteine. The catalysed reaction is adenosine(37) in tRNA + 2 reduced [2Fe-2S]-[ferredoxin] + 2 S-adenosyl-L-methionine = 2-methyladenosine(37) in tRNA + 5'-deoxyadenosine + L-methionine + 2 oxidized [2Fe-2S]-[ferredoxin] + S-adenosyl-L-homocysteine. Functionally, specifically methylates position 2 of adenine 2503 in 23S rRNA and position 2 of adenine 37 in tRNAs. m2A2503 modification seems to play a crucial role in the proofreading step occurring at the peptidyl transferase center and thus would serve to optimize ribosomal fidelity. The chain is Dual-specificity RNA methyltransferase RlmN from Coxiella burnetii (strain CbuK_Q154) (Coxiella burnetii (strain Q154)).